A 400-amino-acid chain; its full sequence is Phosphoglycerate kinase (400 aa).

Residues 21-23, R36, 59-62, R119, and R160 each bind substrate; these read DFN and HLGR. Residues K211, E329, and 356–359 contribute to the ATP site; that span reads GGDS.

It belongs to the phosphoglycerate kinase family. As to quaternary structure, monomer.

It localises to the cytoplasm. It catalyses the reaction (2R)-3-phosphoglycerate + ATP = (2R)-3-phospho-glyceroyl phosphate + ADP. It participates in carbohydrate degradation; glycolysis; pyruvate from D-glyceraldehyde 3-phosphate: step 2/5. This chain is Phosphoglycerate kinase, found in Levilactobacillus brevis (strain ATCC 367 / BCRC 12310 / CIP 105137 / JCM 1170 / LMG 11437 / NCIMB 947 / NCTC 947) (Lactobacillus brevis).